Consider the following 347-residue polypeptide: Ryncolin-3 (347 aa).

The N-terminal stretch at 1 to 19 is a signal peptide; sequence MKPWAAFHLIFLVASSVEG. The Collagen-like domain occupies 57-114; the sequence is GIPGVPGINGSEGLKGDPGPQGLPGETGFDGIPGVAGPKGDKGDQGDKGDKGDKGDKG. Residues 62–115 form a disordered region; it reads PGINGSEGLKGDPGPQGLPGETGFDGIPGVAGPKGDKGDQGDKGDKGDKGDKGD. Basic and acidic residues predominate over residues 95–115; it reads KGDKGDQGDKGDKGDKGDKGD. The Fibrinogen C-terminal domain occupies 121-341; that stretch reads DCPPTDVEVR…YADMKIRPQQ (221 aa). Disulfide bonds link cysteine 132–cysteine 160 and cysteine 284–cysteine 297.

Belongs to the ficolin lectin family. Veficolin subfamily. In terms of processing, hydroxylated. Expressed by the venom duct.

The protein localises to the secreted. Functionally, initiates complement activation and/or interferes in platelet aggregation and/or blood coagulation. This chain is Ryncolin-3, found in Cerberus rynchops (Dog-faced water snake).